We begin with the raw amino-acid sequence, 238 residues long: uncharacterized protein (238 aa).

This is an uncharacterized protein from Methanocaldococcus jannaschii (strain ATCC 43067 / DSM 2661 / JAL-1 / JCM 10045 / NBRC 100440) (Methanococcus jannaschii).